The following is a 301-amino-acid chain: Probable deoxyhypusine synthase 1 (301 aa).

The Nucleophile role is filled by Lys269.

This sequence belongs to the deoxyhypusine synthase family. The cofactor is NAD(+).

The enzyme catalyses [eIF5A protein]-L-lysine + spermidine = [eIF5A protein]-deoxyhypusine + propane-1,3-diamine. It functions in the pathway protein modification; eIF5A hypusination. Functionally, catalyzes the NAD-dependent oxidative cleavage of spermidine and the subsequent transfer of the butylamine moiety of spermidine to the epsilon-amino group of a specific lysine residue of the eIF-5A precursor protein to form the intermediate deoxyhypusine residue. This chain is Probable deoxyhypusine synthase 1 (dys1), found in Archaeoglobus fulgidus (strain ATCC 49558 / DSM 4304 / JCM 9628 / NBRC 100126 / VC-16).